The chain runs to 657 residues: Oleate activated transcription factor 3 (657 aa).

Positions 21 to 48 form a DNA-binding region, zn(2)-C6 fungal-type; it reads CLNCRRRKTKCDRGKPSCSNCLKLGETC.

This sequence belongs to the OAF3 family.

The protein resides in the cytoplasm. The protein localises to the nucleus. It localises to the mitochondrion. In terms of biological role, transcriptional inhibitor with a significantly increased number of target genes in response to oleate. This Kluyveromyces lactis (strain ATCC 8585 / CBS 2359 / DSM 70799 / NBRC 1267 / NRRL Y-1140 / WM37) (Yeast) protein is Oleate activated transcription factor 3 (OAF3).